The sequence spans 415 residues: Squalene synthase 3 (415 aa).

Transmembrane regions (helical) follow at residues 281 to 301 (AIFR…ALCY) and 392 to 412 (LIII…SNLP).

Belongs to the phytoene/squalene synthase family. Mg(2+) serves as cofactor. The cofactor is Mn(2+).

Its subcellular location is the endoplasmic reticulum membrane. The enzyme catalyses 2 (2E,6E)-farnesyl diphosphate + NADH + H(+) = squalene + 2 diphosphate + NAD(+). It catalyses the reaction 2 (2E,6E)-farnesyl diphosphate + NADPH + H(+) = squalene + 2 diphosphate + NADP(+). It participates in terpene metabolism; lanosterol biosynthesis; lanosterol from farnesyl diphosphate: step 1/3. In terms of biological role, component of the triterpene saponins (e.g. ginsenosides or panaxosides) and phytosterols biosynthetic pathways. Catalyzes the biosynthesis of squalene. This chain is Squalene synthase 3, found in Panax ginseng (Korean ginseng).